The chain runs to 105 residues: Small ribosomal subunit protein uS10 (105 aa).

This sequence belongs to the universal ribosomal protein uS10 family. As to quaternary structure, part of the 30S ribosomal subunit.

Functionally, involved in the binding of tRNA to the ribosomes. The protein is Small ribosomal subunit protein uS10 of Legionella pneumophila (strain Paris).